The primary structure comprises 325 residues: Cell wall mannoprotein PIR3 (325 aa).

The signal sequence occupies residues 1–18 (MQYKKPLVVSALAATSLA). Positions 19-67 (AYAPKDPWSTLTPSATYKGGITDYSSSFGIAIEAVATSASSVASSKAKR) are excised as a propeptide. PIR1/2/3 repeat units lie at residues 68–91 (AASQ…KKST), 92–109 (AAAV…AKST), 110–127 (AAAV…AKST), 128–145 (AAAV…AKST), 146–163 (AAAV…AKST), 164–181 (AAAA…TTST), 182–199 (KAAA…SKTT), and 200–217 (SGAS…AEVK).

The protein belongs to the PIR protein family. Covalently linked to beta-1,3-glucan of the inner cell wall layer via an alkali-sensitive ester linkage between the gamma-carboxyl group of glutamic acids, arising from specific glutamines within the PIR1/2/3 repeats, and hydroxyl groups of glucoses of beta-1,3-glucan chains. Post-translationally, O-glycosylated. Extensively O-mannosylated.

Its subcellular location is the secreted. The protein resides in the cell wall. Component of the outer cell wall layer. Required for stability of the cell wall and for optimal growth. Required for resistance against several antifungal and cell wall-perturbing agents. In Saccharomyces cerevisiae (strain ATCC 204508 / S288c) (Baker's yeast), this protein is Cell wall mannoprotein PIR3 (PIR3).